We begin with the raw amino-acid sequence, 748 residues long: Spidroin-1 (748 aa).

25 tandem repeats follow at residues 1-25, 26-38, 39-66, 67-96, 97-130, 131-158, 159-191, 192-204, 205-235, 236-262, 263-292, 293-305, 306-333, 334-360, 361-394, 395-424, 425-458, 459-485, 486-512, 513-525, 526-555, 556-582, 583-612, 613-642, and 643-655. The interval 1-655 is 25 X approximate tandem repeats; sequence QGAGAAAAAA…ASAAASRLSS (655 aa).

The protein belongs to the silk fibroin family. In terms of assembly, major subunit, with spidroin 2, of the dragline silk.

It localises to the secreted. It is found in the extracellular space. Its function is as follows. Spiders' major ampullate silk possesses unique characteristics of strength and elasticity. Fibroin consists of pseudocrystalline regions of antiparallel beta-sheet interspersed with elastic amorphous segments. This Trichonephila clavipes (Golden silk orbweaver) protein is Spidroin-1.